The following is a 419-amino-acid chain: Metacaspase-1B (419 aa).

Positions 1 to 109 are disordered; the sequence is MYHPNYNYPP…PPMEAQQFGK (109 aa). Positions 33 to 50 are enriched in pro residues; it reads SPPPPQPYYSNGYPPPSQ. Residues 51–66 show a composition bias toward low complexity; that stretch reads SPHSYSPPQYPPHGQY. Positions 82–93 are enriched in polar residues; sequence QYRSYHSHSPSW. Catalysis depends on residues histidine 210 and cysteine 266.

The protein belongs to the peptidase C14B family.

Functionally, involved in cell death (apoptosis). This chain is Metacaspase-1B (casB), found in Aspergillus oryzae (strain ATCC 42149 / RIB 40) (Yellow koji mold).